The primary structure comprises 258 residues: Imidazole glycerol phosphate synthase subunit HisF (258 aa).

Active-site residues include Asp11 and Asp130.

It belongs to the HisA/HisF family. In terms of assembly, heterodimer of HisH and HisF.

Its subcellular location is the cytoplasm. It catalyses the reaction 5-[(5-phospho-1-deoxy-D-ribulos-1-ylimino)methylamino]-1-(5-phospho-beta-D-ribosyl)imidazole-4-carboxamide + L-glutamine = D-erythro-1-(imidazol-4-yl)glycerol 3-phosphate + 5-amino-1-(5-phospho-beta-D-ribosyl)imidazole-4-carboxamide + L-glutamate + H(+). Its pathway is amino-acid biosynthesis; L-histidine biosynthesis; L-histidine from 5-phospho-alpha-D-ribose 1-diphosphate: step 5/9. In terms of biological role, IGPS catalyzes the conversion of PRFAR and glutamine to IGP, AICAR and glutamate. The HisF subunit catalyzes the cyclization activity that produces IGP and AICAR from PRFAR using the ammonia provided by the HisH subunit. This Serratia proteamaculans (strain 568) protein is Imidazole glycerol phosphate synthase subunit HisF.